Here is a 348-residue protein sequence, read N- to C-terminus: Bombesin receptor-activated protein C6orf89 homolog (348 aa).

The Cytoplasmic portion of the chain corresponds to 1–58; sequence MDLAANEISIYDKLSETVDLVRQTGHQCGMSEKAIEKFIRQLLEKNEPQRGPPQYPLL. Residues 59–79 traverse the membrane as a helical segment; it reads IAMYKVLLTLGLILFTAYFVI. The Extracellular segment spans residues 80–348; sequence QPFSSLAPEP…ICDGTTLSEL (269 aa).

As to quaternary structure, homodimer. Interacts with BRS3. Interacts (via N-terminus) with SIN3B. Glycosylated.

It is found in the golgi apparatus membrane. It localises to the cytoplasm. In terms of biological role, exhibits histone deacetylase (HDAC) enhancer properties. May play a role in cell cycle progression and wound repair of bronchial epithelial cells. In Rattus norvegicus (Rat), this protein is Bombesin receptor-activated protein C6orf89 homolog.